Here is a 116-residue protein sequence, read N- to C-terminus: Dynein light chain Tctex-type 3 (116 aa).

3'-nitrotyrosine is present on Tyr4.

Belongs to the dynein light chain Tctex-type family. As to quaternary structure, homodimer. The cytoplasmic dynein 1 complex consists of two catalytic heavy chains (HCs) and a number of non-catalytic subunits presented by intermediate chains (ICs), light intermediate chains (LICs) and light chains (LCs); the composition seems to vary in respect to the IC, LIC and LC composition. The heavy chain homodimer serves as a scaffold for the probable homodimeric assembly of the respective non-catalytic subunits. The ICs and LICs bind directly to the HC dimer and the LCs assemble on the IC dimer. DYNLT1 and DYNLT3 compete for association with dynein IC (DYNC1I1 or DYNC1I2). Self-associates. Interacts with DYNC1I1 and DYNC1I2. Interacts with BUB3. Interacts with SATB1 in nucleus to form complex with matrix attachment regions (MARs) of DNA.

It is found in the nucleus. The protein localises to the cytoplasm. It localises to the cytoskeleton. Its subcellular location is the chromosome. The protein resides in the centromere. It is found in the kinetochore. In terms of biological role, acts as one of several non-catalytic accessory components of the cytoplasmic dynein 1 complex that are thought to be involved in linking dynein to cargos and to adapter proteins that regulate dynein function. Cytoplasmic dynein 1 acts as a motor for the intracellular retrograde motility of vesicles and organelles along microtubules. Probably binds BUB3 as part of transport cargo. Required for the efficient progression through mitosis. This is Dynein light chain Tctex-type 3 (DYNLT3) from Canis lupus familiaris (Dog).